The chain runs to 363 residues: Probable protein phosphatase 2C member 13, mitochondrial (363 aa).

Residues 1-59 constitute a mitochondrion transit peptide; that stretch reads MVCFASLRRALPLLLRATTTTTPRFLLPRALSGGVGGGAAVDARALLRGHSGWRGLRVA. The region spanning 111-357 is the PPM-type phosphatase domain; the sequence is KCGYSSFRGK…DNITCIVVQF (247 aa). Positions 147, 148, 309, and 348 each coordinate Mn(2+).

This sequence belongs to the PP2C family. Mg(2+) serves as cofactor. It depends on Mn(2+) as a cofactor. As to expression, highly expressed in mature pollen grains.

The protein localises to the mitochondrion. The catalysed reaction is O-phospho-L-seryl-[protein] + H2O = L-seryl-[protein] + phosphate. It catalyses the reaction O-phospho-L-threonyl-[protein] + H2O = L-threonyl-[protein] + phosphate. Probable protein phosphatase that may play a role as a mitochondrial signal transduction mediator in pollen germination. May function in retrograde signaling from the mitochondria to the nucleus. May be a downstream factor of cytoplasmic male sterility (CMS). CMS is caused by genetic incompatibility between nuclei and mitochondria within male reproductive organs. This is Probable protein phosphatase 2C member 13, mitochondrial from Oryza sativa subsp. japonica (Rice).